The primary structure comprises 1208 residues: Putative protease AXL1 (1208 aa).

Histidine 68 is a binding site for Zn(2+). Glutamate 71 serves as the catalytic Proton acceptor. 2 residues coordinate Zn(2+): histidine 72 and glutamate 156. A Phosphoserine modification is found at serine 262.

Belongs to the peptidase M16 family. Interacts with BUD5. It depends on Zn(2+) as a cofactor.

It is found in the bud neck. Probable protease. Involved in axial budding. This chain is Putative protease AXL1 (AXL1), found in Saccharomyces cerevisiae (strain ATCC 204508 / S288c) (Baker's yeast).